The sequence spans 367 residues: Phospho-N-acetylmuramoyl-pentapeptide-transferase (367 aa).

10 helical membrane-spanning segments follow: residues 28-48 (GALMTAMLIAFVFGKPMIGWL), 75-95 (TMGGFLILLGVMVGTLLWADL), 96-116 (TNAYVWIVIFVTAGFGVIGFI), 134-154 (FKLVGEFAIALIAVVWATHTA), 175-195 (LMINIGPLFFVFGCVVIVGSG), 206-226 (GLAIVPVMIAAATFGVIAYVV), 243-263 (AGEILIFCGALIGAGIGFLWW), 271-291 (FMGDTGSLSLGGALGTIAVAI), 295-315 (LVLAIVGGLFVLELVSVMVQV), and 344-364 (TIVIRFWIIAVILALIGLATL).

This sequence belongs to the glycosyltransferase 4 family. MraY subfamily. Mg(2+) is required as a cofactor.

The protein localises to the cell inner membrane. The catalysed reaction is UDP-N-acetyl-alpha-D-muramoyl-L-alanyl-gamma-D-glutamyl-meso-2,6-diaminopimeloyl-D-alanyl-D-alanine + di-trans,octa-cis-undecaprenyl phosphate = di-trans,octa-cis-undecaprenyl diphospho-N-acetyl-alpha-D-muramoyl-L-alanyl-D-glutamyl-meso-2,6-diaminopimeloyl-D-alanyl-D-alanine + UMP. It participates in cell wall biogenesis; peptidoglycan biosynthesis. Its function is as follows. Catalyzes the initial step of the lipid cycle reactions in the biosynthesis of the cell wall peptidoglycan: transfers peptidoglycan precursor phospho-MurNAc-pentapeptide from UDP-MurNAc-pentapeptide onto the lipid carrier undecaprenyl phosphate, yielding undecaprenyl-pyrophosphoryl-MurNAc-pentapeptide, known as lipid I. This Maricaulis maris (strain MCS10) (Caulobacter maris) protein is Phospho-N-acetylmuramoyl-pentapeptide-transferase.